The chain runs to 210 residues: MDPTLYCVVAVDTKLGIGKNRCLPWPALRGDMRRFRQLTTDCAPGKQNMVVMGRRTWLSIPAGCRPLAGRINVVLSRTLETPPPGAHFLASSLDAALGLARSPELAQQIDKVWVIGGGNLYREALTGPWPVRLFLTRVLHDFACDVFLSHDSLAAYARVNPKPGEQERVFQERGIFYMFETYIKVTQSSDTALPDLERPRPATPPFSETS.

Residues 4–184 enclose the DHFR domain; sequence TLYCVVAVDT…IFYMFETYIK (181 aa).

The protein belongs to the dihydrofolate reductase family.

It carries out the reaction (6S)-5,6,7,8-tetrahydrofolate + NADP(+) = 7,8-dihydrofolate + NADPH + H(+). The sequence is that of Putative Dihydrofolate reductase (ORF2) from Human herpesvirus 8 type P (isolate GK18) (HHV-8).